A 133-amino-acid chain; its full sequence is Small ribosomal subunit protein uS8 (133 aa).

This sequence belongs to the universal ribosomal protein uS8 family. As to quaternary structure, part of the 30S ribosomal subunit. Contacts proteins S5 and S12.

In terms of biological role, one of the primary rRNA binding proteins, it binds directly to 16S rRNA central domain where it helps coordinate assembly of the platform of the 30S subunit. In Mycoplasmoides gallisepticum (strain R(low / passage 15 / clone 2)) (Mycoplasma gallisepticum), this protein is Small ribosomal subunit protein uS8.